A 130-amino-acid polypeptide reads, in one-letter code: Putative pre-16S rRNA nuclease (130 aa).

Belongs to the YqgF nuclease family.

The protein resides in the cytoplasm. In terms of biological role, could be a nuclease involved in processing of the 5'-end of pre-16S rRNA. The protein is Putative pre-16S rRNA nuclease of Sulfurimonas denitrificans (strain ATCC 33889 / DSM 1251) (Thiomicrospira denitrificans (strain ATCC 33889 / DSM 1251)).